Here is a 198-residue protein sequence, read N- to C-terminus: Transmembrane protein 9B (198 aa).

A signal peptide spans 1–33 (MATLWGGLLRLGSLLSLSCLALSVLLLAQLSDA). The N-linked (GlcNAc...) asparagine glycan is linked to Asn-60. Residues 105 to 125 (IIIYLSILGLLLLYMVYLTLV) traverse the membrane as a helical segment. 2 positions are modified to phosphoserine: Ser-142 and Ser-189.

It belongs to the TMEM9 family. In terms of processing, N-glycosylated.

Its subcellular location is the lysosome membrane. The protein localises to the early endosome membrane. In terms of biological role, enhances production of pro-inflammatory cytokines induced by TNF, IL1B, and TLR ligands. Has a role in TNF activation of both the NF-kappaB and MAPK pathways. This is Transmembrane protein 9B (TMEM9B) from Homo sapiens (Human).